The sequence spans 139 residues: Holo-[acyl-carrier-protein] synthase (139 aa).

D8 and E57 together coordinate Mg(2+).

It belongs to the P-Pant transferase superfamily. AcpS family. Requires Mg(2+) as cofactor.

It is found in the cytoplasm. It carries out the reaction apo-[ACP] + CoA = holo-[ACP] + adenosine 3',5'-bisphosphate + H(+). Transfers the 4'-phosphopantetheine moiety from coenzyme A to a Ser of acyl-carrier-protein. In Rhizobium meliloti (strain 1021) (Ensifer meliloti), this protein is Holo-[acyl-carrier-protein] synthase.